Reading from the N-terminus, the 200-residue chain is Large ribosomal subunit protein bL25 (200 aa).

It belongs to the bacterial ribosomal protein bL25 family. CTC subfamily. As to quaternary structure, part of the 50S ribosomal subunit; part of the 5S rRNA/L5/L18/L25 subcomplex. Contacts the 5S rRNA. Binds to the 5S rRNA independently of L5 and L18.

This is one of the proteins that binds to the 5S RNA in the ribosome where it forms part of the central protuberance. The chain is Large ribosomal subunit protein bL25 from Caldicellulosiruptor bescii (strain ATCC BAA-1888 / DSM 6725 / KCTC 15123 / Z-1320) (Anaerocellum thermophilum).